The following is a 323-amino-acid chain: NADH-cytochrome b5 reductase 2 (323 aa).

A helical membrane pass occupies residues 32-48; it reads LAPIYVAVGLTGLGVGL. In terms of domain architecture, FAD-binding FR-type spans 72 to 177; it reads QGWVDLKLAQ…KGPIPKYPWE (106 aa). 180–215 provides a ligand contact to FAD; the sequence is KHKHICLIAGGTGITPMYQLARKIFKDPEDQTKVTL.

It belongs to the flavoprotein pyridine nucleotide cytochrome reductase family. FAD serves as cofactor.

It is found in the mitochondrion outer membrane. The catalysed reaction is 2 Fe(III)-[cytochrome b5] + NADH = 2 Fe(II)-[cytochrome b5] + NAD(+) + H(+). May mediate the reduction of outer membrane cytochrome b5. The chain is NADH-cytochrome b5 reductase 2 (mcr1) from Neosartorya fischeri (strain ATCC 1020 / DSM 3700 / CBS 544.65 / FGSC A1164 / JCM 1740 / NRRL 181 / WB 181) (Aspergillus fischerianus).